Consider the following 246-residue polypeptide: MSVISMKQLLEAGVHFGHQTRRWNPKMKRYIFTERNGIYIIDLQKTVKKVEEAYNFTKNLAAEGGKILFVGTKKQAQDSVKEEAQRSGMYYVNQRWLGGTLTNFETIQKRIKRLKDIEKMQENGTFDVLPKKEVVQLKKELERLEKFLGGIKDMKDLPDALFIIDPRKERIAVAEARKLNIPIIGIVDTNCDPDEIDVVIPANDDAIRAVKLLTSKMADAILEAKQGEEEAEVAEETAPETETTTA.

The segment at 226-246 is disordered; it reads QGEEEAEVAEETAPETETTTA. Positions 229 to 239 are enriched in acidic residues; sequence EEAEVAEETAP.

It belongs to the universal ribosomal protein uS2 family. Part of the 30S ribosomal subunit. Interacts with BrxC.

The protein is Small ribosomal subunit protein uS2 (rpsB) of Bacillus subtilis (strain 168).